We begin with the raw amino-acid sequence, 432 residues long: Nuclear pore complex-interacting protein family member B9 (432 aa).

Disordered regions lie at residues 260–280 and 353–420; these read RMGR…NSLS and SPLP…LRTR. Positions 270–280 are enriched in polar residues; that stretch reads QQHSITDNSLS. Residues 374 to 402 are compositionally biased toward basic and acidic residues; sequence EVEKPPKPKRWRVDEVEQSPKPKRQREAE. Over residues 408–420 the composition is skewed to basic residues; that stretch reads KPKRRRLSKLRTR.

This sequence belongs to the NPIP family.

The chain is Nuclear pore complex-interacting protein family member B9 (NPIPB9) from Homo sapiens (Human).